The primary structure comprises 590 residues: UvrABC system protein C (590 aa).

One can recognise a GIY-YIG domain in the interval 11–85 (ETPGVYLWKR…IKAHRPLYNV (75 aa)). A UVR domain is found at 194 to 229 (DGLLQELEAKMREAARRLEFERAAEIRDQMEALRAF).

Belongs to the UvrC family. Interacts with UvrB in an incision complex.

Its subcellular location is the cytoplasm. The UvrABC repair system catalyzes the recognition and processing of DNA lesions. UvrC both incises the 5' and 3' sides of the lesion. The N-terminal half is responsible for the 3' incision and the C-terminal half is responsible for the 5' incision. The polypeptide is UvrABC system protein C (Thermus thermophilus (strain ATCC 27634 / DSM 579 / HB8)).